A 598-amino-acid chain; its full sequence is Pantothenate kinase 1 (598 aa).

A disordered region spans residues 32–161 (ARPGDQGKAG…SPGAPVGTSA (130 aa)). The segment covering 38-49 (GKAGGGSPGWGC) has biased composition (gly residues). A Phosphoserine modification is found at S215. Residues 218–235 (KKCRLRRRMDSGRKNRPP) carry the Nucleolar localization signal motif. E363 functions as the Proton acceptor in the catalytic mechanism. S417, S420, and R432 together coordinate acetyl-CoA.

It belongs to the type II pantothenate kinase family. As to quaternary structure, homodimer. Expressed at high levels in brain, heart, kidney, liver, skeletal muscle and testis. In terms of tissue distribution, detected at much lower levels in kidney, liver, brain and testis and not detected in heart or skeletal muscle.

It is found in the cytoplasm. It localises to the nucleus. The protein resides in the nucleolus. Its subcellular location is the cytosol. The protein localises to the cytoplasmic vesicle. It is found in the clathrin-coated vesicle. It localises to the recycling endosome. It catalyses the reaction (R)-pantothenate + ATP = (R)-4'-phosphopantothenate + ADP + H(+). The protein operates within cofactor biosynthesis; coenzyme A biosynthesis; CoA from (R)-pantothenate: step 1/5. With respect to regulation, regulated by feedback inhibition by CoA and its thioesters. Catalyzes the phosphorylation of pantothenate to generate 4'-phosphopantothenate in the first and rate-determining step of coenzyme A (CoA) synthesis. The protein is Pantothenate kinase 1 (PANK1) of Homo sapiens (Human).